A 65-amino-acid polypeptide reads, in one-letter code: Double gene block protein 1 (65 aa).

The disordered stretch occupies residues Met-1–Glu-41. Residues Arg-15–Gly-24 show a composition bias toward basic and acidic residues. Residues Lys-17–Lys-43 form an RNA-binding region.

It belongs to the carmovirus double gene block protein 1 family. Homodimer.

In terms of biological role, cell-to-cell movement. Displays RNA-binding activity. This chain is Double gene block protein 1, found in Melon necrotic spot virus (MNSV).